The following is a 541-amino-acid chain: GMP synthase [glutamine-hydrolyzing] (541 aa).

Positions 15-209 constitute a Glutamine amidotransferase type-1 domain; it reads TILTLDFGSQ…AVNICGCKQN (195 aa). Cys91 functions as the Nucleophile in the catalytic mechanism. Residues His183 and Glu185 contribute to the active site. Residues 210–416 form the GMPS ATP-PPase domain; sequence WTMARFVDQE…LGIAHEMVMR (207 aa). 238–244 contacts ATP; the sequence is SGGVDST. XMP is bound by residues Arg311, Asp478, Lys533, and Glu539.

In terms of assembly, homodimer. Mg(2+) serves as cofactor.

It is found in the cytoplasm. The protein resides in the cytosol. It carries out the reaction XMP + L-glutamine + ATP + H2O = GMP + L-glutamate + AMP + diphosphate + 2 H(+). It participates in purine metabolism; GMP biosynthesis; GMP from XMP (L-Gln route): step 1/1. Its function is as follows. Catalyzes the conversion of xanthine monophosphate (XMP) to GMP in the presence of glutamine and ATP through an adenyl-XMP intermediate. This Aspergillus oryzae (strain ATCC 42149 / RIB 40) (Yellow koji mold) protein is GMP synthase [glutamine-hydrolyzing] (gua1).